A 240-amino-acid polypeptide reads, in one-letter code: 1-(5-phosphoribosyl)-5-[(5-phosphoribosylamino)methylideneamino] imidazole-4-carboxamide isomerase (240 aa).

Catalysis depends on D8, which acts as the Proton acceptor. D130 (proton donor) is an active-site residue.

The protein belongs to the HisA/HisF family.

It localises to the cytoplasm. It catalyses the reaction 1-(5-phospho-beta-D-ribosyl)-5-[(5-phospho-beta-D-ribosylamino)methylideneamino]imidazole-4-carboxamide = 5-[(5-phospho-1-deoxy-D-ribulos-1-ylimino)methylamino]-1-(5-phospho-beta-D-ribosyl)imidazole-4-carboxamide. Its pathway is amino-acid biosynthesis; L-histidine biosynthesis; L-histidine from 5-phospho-alpha-D-ribose 1-diphosphate: step 4/9. In Flavobacterium johnsoniae (strain ATCC 17061 / DSM 2064 / JCM 8514 / BCRC 14874 / CCUG 350202 / NBRC 14942 / NCIMB 11054 / UW101) (Cytophaga johnsonae), this protein is 1-(5-phosphoribosyl)-5-[(5-phosphoribosylamino)methylideneamino] imidazole-4-carboxamide isomerase.